Here is a 170-residue protein sequence, read N- to C-terminus: Myelin-associated oligodendrocyte basic protein (170 aa).

Residues 69-170 (SRRATSPQRP…GSPTRAPRFW (102 aa)) form a disordered region. Low complexity predominate over residues 82–92 (PAASPVVVRAP). Residues serine 85, serine 98, and serine 107 each carry the phosphoserine modification. Repeat copies occupy residues 93 to 101 (PAKPKSPLM) and 105 to 110 (PRSPPR). Positions 93 to 115 (PAKPKSPLMPAKPRSPPRPAKPR) are 3 X 9 AA approximate tandem repeats. One copy of the 3; half-length repeat lies at 111–115 (PAKPR). The span at 118–130 (SRTERQPRPRPEV) shows a compositional bias: basic and acidic residues. Positions 138–151 (KPPQKSKQPARSSP) are enriched in low complexity.

The protein resides in the cytoplasm. It localises to the perinuclear region. May play a role in compacting or stabilizing the myelin sheath possibly by binding the negatively charged acidic phospholipids of the cytoplasmic membrane. The polypeptide is Myelin-associated oligodendrocyte basic protein (Mobp) (Mus musculus (Mouse)).